The chain runs to 413 residues: Multifunctional CCA protein (413 aa).

Positions 8 and 11 each coordinate ATP. CTP contacts are provided by G8 and R11. D21 and D23 together coordinate Mg(2+). ATP contacts are provided by R91, R143, and R146. The CTP site is built by R91, R143, and R146. The 102-residue stretch at T232 to L333 folds into the HD domain.

This sequence belongs to the tRNA nucleotidyltransferase/poly(A) polymerase family. Bacterial CCA-adding enzyme type 1 subfamily. Monomer. Can also form homodimers and oligomers. The cofactor is Mg(2+). Requires Ni(2+) as cofactor.

The enzyme catalyses a tRNA precursor + 2 CTP + ATP = a tRNA with a 3' CCA end + 3 diphosphate. It catalyses the reaction a tRNA with a 3' CCA end + 2 CTP + ATP = a tRNA with a 3' CCACCA end + 3 diphosphate. Its function is as follows. Catalyzes the addition and repair of the essential 3'-terminal CCA sequence in tRNAs without using a nucleic acid template. Adds these three nucleotides in the order of C, C, and A to the tRNA nucleotide-73, using CTP and ATP as substrates and producing inorganic pyrophosphate. tRNA 3'-terminal CCA addition is required both for tRNA processing and repair. Also involved in tRNA surveillance by mediating tandem CCA addition to generate a CCACCA at the 3' terminus of unstable tRNAs. While stable tRNAs receive only 3'-terminal CCA, unstable tRNAs are marked with CCACCA and rapidly degraded. The chain is Multifunctional CCA protein from Burkholderia pseudomallei (strain 668).